The chain runs to 430 residues: Enolase (430 aa).

(2R)-2-phosphoglycerate is bound at residue Gln-163. Residue Glu-205 is the Proton donor of the active site. Mg(2+) contacts are provided by Asp-242, Glu-288, and Asp-315. (2R)-2-phosphoglycerate-binding residues include Lys-340, Arg-369, Ser-370, and Lys-391. Lys-340 (proton acceptor) is an active-site residue.

The protein belongs to the enolase family. The cofactor is Mg(2+).

Its subcellular location is the cytoplasm. It localises to the secreted. It is found in the cell surface. It catalyses the reaction (2R)-2-phosphoglycerate = phosphoenolpyruvate + H2O. It participates in carbohydrate degradation; glycolysis; pyruvate from D-glyceraldehyde 3-phosphate: step 4/5. Functionally, catalyzes the reversible conversion of 2-phosphoglycerate (2-PG) into phosphoenolpyruvate (PEP). It is essential for the degradation of carbohydrates via glycolysis. The chain is Enolase from Phytoplasma australiense.